The primary structure comprises 720 residues: Hexanoyl-CoA synthase (720 aa).

The helical transmembrane segment at 242 to 262 (VDAVVIYLAIVLAGYVVVSIA) threads the bilayer. 290–293 (RGKK) contacts CoA. ATP is bound by residues 477-479 (GEA), 499-504 (EMCGGT), Glu585, and Arg607. Gly615 is a CoA binding site. An ATP-binding site is contributed by Lys618. Gln681 contacts CoA.

This sequence belongs to the ATP-dependent AMP-binding enzyme family. Mg(2+) is required as a cofactor. As to expression, accumulates in glandular trichomes, especially in female flowers. Present at low levels in roots, stems and leaves.

It localises to the cytoplasm. Its subcellular location is the cytosol. The protein localises to the membrane. It carries out the reaction hexanoate + ATP + CoA = hexanoyl-CoA + AMP + diphosphate. It functions in the pathway secondary metabolite biosynthesis; terpenoid biosynthesis. Its activity is regulated as follows. Inhibitied by high CoA concentrations. Functionally, involved in the biosynthesis of cannabinoids-related terpenophenolic natural products, which have pharmacological activity. Acyl-activating enzyme that catalyzes the conversion of hexanoic acid to hexanoyl-CoA, precursor of the cannabinoid pathway. Can also activate other fatty acids including heptanoate, octanoate and nonanoate. This chain is Hexanoyl-CoA synthase, found in Cannabis sativa (Hemp).